A 334-amino-acid chain; its full sequence is Porphobilinogen deaminase (334 aa).

Cys258 carries the post-translational modification S-(dipyrrolylmethanemethyl)cysteine.

This sequence belongs to the HMBS family. In terms of assembly, monomer. Dipyrromethane serves as cofactor.

It catalyses the reaction 4 porphobilinogen + H2O = hydroxymethylbilane + 4 NH4(+). Its pathway is porphyrin-containing compound metabolism; protoporphyrin-IX biosynthesis; coproporphyrinogen-III from 5-aminolevulinate: step 2/4. Tetrapolymerization of the monopyrrole PBG into the hydroxymethylbilane pre-uroporphyrinogen in several discrete steps. The polypeptide is Porphobilinogen deaminase (Ralstonia nicotianae (strain ATCC BAA-1114 / GMI1000) (Ralstonia solanacearum)).